The chain runs to 372 residues: MTFSVQETLFSLLRLNGISGHESSIANVMQHAFEQQAKDVWRDRLGNVVARYGSDKSDALRLMIFAHMDEVGFMVRKIEPSGFLRFERVGGPAQITMPGSIVTLAGCSGDIMGCIGIKAYHFAKGDERTQPPALDKLWIDIGAKDKADAERMGIQVGTPVTLYNPPHCLGNDLVCSKALDDRLGCTALLGVAEALASTPLDIAVFLVASVQEEFNIRGIVPVLRRVRPDLAIGIDITPSCDTPDLQDYSDVRVNHGVGITCLNYHGRGTLAGLITPPRLLRMLETTAHENNIPVQREVAPGVITETGYIQVELDGIPCASLSIPCRYTHSPAEVASLRDLADCIRLLTALANMSPEQFPIDPETGATQEARP.

Residues H67 and D180 each contribute to the a divalent metal cation site. Catalysis depends on E212, which acts as the Proton acceptor. 3 residues coordinate a divalent metal cation: E213, D235, and H329.

Belongs to the peptidase M42 family. A divalent metal cation is required as a cofactor.

In Salmonella typhi, this protein is Putative aminopeptidase SgcX (sgcX).